Reading from the N-terminus, the 157-residue chain is Protein Smg homolog (157 aa).

It belongs to the Smg family.

This Shewanella piezotolerans (strain WP3 / JCM 13877) protein is Protein Smg homolog.